Consider the following 245-residue polypeptide: RNA polymerase sigma factor SigI5 (245 aa).

A Polymerase core binding motif is present at residues 60-73; it reads DEYSIGLMAFNEAI. Residues 202 to 221 constitute a DNA-binding region (H-T-H motif); it reads MKELSKIIDVHPKTVERNRA.

The protein belongs to the sigma-70 factor family. SigI subfamily. In terms of assembly, interacts with RsgI5.

Its subcellular location is the cytoplasm. With respect to regulation, negatively regulated by the anti-sigma-I factor RsgI5. Binding of the polysaccharide substrate to RsgI5 may lead to the release and activation of SigI5. Functionally, sigma factors are initiation factors that promote the attachment of RNA polymerase to specific initiation sites and are then released. This sigma factor is involved in regulation of cellulosomal genes via an external polysaccharide-sensing mechanism. This Acetivibrio thermocellus (strain ATCC 27405 / DSM 1237 / JCM 9322 / NBRC 103400 / NCIMB 10682 / NRRL B-4536 / VPI 7372) (Clostridium thermocellum) protein is RNA polymerase sigma factor SigI5.